Here is a 515-residue protein sequence, read N- to C-terminus: 2-isopropylmalate synthase (515 aa).

The 264-residue stretch at 5-268 (VIIFDTTLRD…VCGIDASQIV (264 aa)) folds into the Pyruvate carboxyltransferase domain. Mn(2+) contacts are provided by Asp14, His202, His204, and Asn239. Residues 394 to 515 (HFISLSQHSE…QAKLNAQMAP (122 aa)) form a regulatory domain region.

Belongs to the alpha-IPM synthase/homocitrate synthase family. LeuA type 1 subfamily. Homodimer. Requires Mn(2+) as cofactor.

The protein localises to the cytoplasm. It catalyses the reaction 3-methyl-2-oxobutanoate + acetyl-CoA + H2O = (2S)-2-isopropylmalate + CoA + H(+). Its pathway is amino-acid biosynthesis; L-leucine biosynthesis; L-leucine from 3-methyl-2-oxobutanoate: step 1/4. Functionally, catalyzes the condensation of the acetyl group of acetyl-CoA with 3-methyl-2-oxobutanoate (2-ketoisovalerate) to form 3-carboxy-3-hydroxy-4-methylpentanoate (2-isopropylmalate). The polypeptide is 2-isopropylmalate synthase (Polynucleobacter asymbioticus (strain DSM 18221 / CIP 109841 / QLW-P1DMWA-1) (Polynucleobacter necessarius subsp. asymbioticus)).